Here is a 468-residue protein sequence, read N- to C-terminus: ATP synthase subunit beta (468 aa).

155-162 (GGAGVGKT) provides a ligand contact to ATP.

This sequence belongs to the ATPase alpha/beta chains family. F-type ATPases have 2 components, CF(1) - the catalytic core - and CF(0) - the membrane proton channel. CF(1) has five subunits: alpha(3), beta(3), gamma(1), delta(1), epsilon(1). CF(0) has three main subunits: a(1), b(2) and c(9-12). The alpha and beta chains form an alternating ring which encloses part of the gamma chain. CF(1) is attached to CF(0) by a central stalk formed by the gamma and epsilon chains, while a peripheral stalk is formed by the delta and b chains.

Its subcellular location is the cell membrane. The catalysed reaction is ATP + H2O + 4 H(+)(in) = ADP + phosphate + 5 H(+)(out). Produces ATP from ADP in the presence of a proton gradient across the membrane. The catalytic sites are hosted primarily by the beta subunits. The sequence is that of ATP synthase subunit beta from Streptococcus pneumoniae (strain CGSP14).